The primary structure comprises 322 residues: Probable heme-iron transport system permease protein IsdF (322 aa).

Helical transmembrane passes span 9–29 (LLFL…FVTG), 61–81 (ILIA…LQAA), 89–109 (ANII…MLFI), 114–134 (FYLP…IIVL), 143–163 (VSMI…LEIL), 179–199 (IWSD…LTLL), 233–253 (VFLA…GIIV), 267–287 (VLIP…DLLG), and 294–314 (LEIP…IYLI).

It belongs to the binding-protein-dependent transport system permease family. FecCD subfamily.

It is found in the cell membrane. In terms of biological role, part of the binding-protein-dependent transport system for heme-iron. Responsible for the translocation of the substrate across the membrane. This chain is Probable heme-iron transport system permease protein IsdF (isdF), found in Staphylococcus aureus (strain bovine RF122 / ET3-1).